The sequence spans 1023 residues: Probable histidine kinase 3 (1023 aa).

The Cytoplasmic portion of the chain corresponds to 1–80; that stretch reads MDEMSCGGGG…RGWRVVRETW (80 aa). The helical transmembrane segment at 81 to 101 threads the bilayer; it reads WWVLLLWILAGSLGSFYLFLF. Residues 102 to 387 lie on the Extracellular side of the membrane; that stretch reads MNAQSLDKRR…CRFEKKPPWP (286 aa). The CHASE domain occupies 151–352; that stretch reads TPSAIDQMTF…TNESPISMYG (202 aa). Residues 388–408 form a helical membrane-spanning segment; the sequence is WLAITSSFGTLVIALLTGHIF. At 409–1023 the chain is on the cytoplasmic side; that stretch reads QATVHRIAKV…RFFQNHDQVE (615 aa). The Histidine kinase domain occupies 445–715; sequence TVSHEIRTPM…TFTFTAVLMR (271 aa). The residue at position 448 (His448) is a Phosphohistidine; by autocatalysis. Response regulatory domains follow at residues 732-854 and 880-1016; these read NALV…RRAL and QIIV…ARFF. Position 783 is a 4-aspartylphosphate (Asp783). The disordered stretch occupies residues 812-831; it reads LFLLGSSASSPKGGSDTSRE. The segment covering 817 to 827 has biased composition (polar residues); sequence SSASSPKGGSD. Asp930 is subject to 4-aspartylphosphate.

Post-translationally, activation probably requires a transfer of a phosphate group between a His in the transmitter domain and an Asp of the receiver domain. In terms of tissue distribution, highly expressed in young leaves and at lower levels in roots, mature leaves, stems and spikelets.

It is found in the cell membrane. The catalysed reaction is ATP + protein L-histidine = ADP + protein N-phospho-L-histidine.. Cytokinin receptor related to bacterial two-component regulators. Functions as a histidine kinase and transmits the stress signal to a downstream MAPK cascade. The protein is Probable histidine kinase 3 of Oryza sativa subsp. japonica (Rice).